The sequence spans 327 residues: Mitochondrial coenzyme A transporter SLC25A42 (327 aa).

3 Solcar repeats span residues Lys-34–Leu-120, Leu-132–Leu-217, and Pro-227–Leu-315. Helical transmembrane passes span Ile-36–Pro-56, Leu-92–Cys-112, Leu-138–Val-158, Leu-189–Phe-209, Leu-233–Val-253, and Val-296–Leu-316.

The protein belongs to the mitochondrial carrier (TC 2.A.29) family.

Its subcellular location is the mitochondrion inner membrane. It carries out the reaction ADP(out) + CoA(in) = ADP(in) + CoA(out). The enzyme catalyses 3'-dephospho-CoA(in) + ADP(out) = 3'-dephospho-CoA(out) + ADP(in). It catalyses the reaction adenosine 3',5'-bisphosphate(in) + ADP(out) = adenosine 3',5'-bisphosphate(out) + ADP(in). The catalysed reaction is AMP(in) + ADP(out) = AMP(out) + ADP(in). It carries out the reaction dADP(in) + ADP(out) = dADP(out) + ADP(in). The enzyme catalyses ADP(in) + ATP(out) = ADP(out) + ATP(in). In terms of biological role, mitochondrial carrier mediating the transport of coenzyme A (CoA) in mitochondria in exchange for intramitochondrial (deoxy)adenine nucleotides and adenosine 3',5'-diphosphate. The polypeptide is Mitochondrial coenzyme A transporter SLC25A42 (slc25a42) (Xenopus tropicalis (Western clawed frog)).